Reading from the N-terminus, the 853-residue chain is Protein translocase subunit SecA (853 aa).

ATP is bound by residues glutamine 77, 95–99 (GEGKT), and aspartate 532.

This sequence belongs to the SecA family. Monomer and homodimer. Part of the essential Sec protein translocation apparatus which comprises SecA, SecYEG and auxiliary proteins SecDF. Other proteins may also be involved.

It localises to the cell inner membrane. The protein localises to the cytoplasm. It carries out the reaction ATP + H2O + cellular proteinSide 1 = ADP + phosphate + cellular proteinSide 2.. Part of the Sec protein translocase complex. Interacts with the SecYEG preprotein conducting channel. Has a central role in coupling the hydrolysis of ATP to the transfer of proteins into and across the cell membrane, serving as an ATP-driven molecular motor driving the stepwise translocation of polypeptide chains across the membrane. This chain is Protein translocase subunit SecA, found in Thermosipho melanesiensis (strain DSM 12029 / CIP 104789 / BI429).